A 1010-amino-acid polypeptide reads, in one-letter code: ATP-dependent DNA/RNA helicase DHX36 (1010 aa).

Residues 1–54 (MSYDYHQNWGRDGGPRSSGGGYGGSYGGSHGGGHGGNRGSGGGGGGGGGRGGRG) are required for recruitment to cytoplasmic stress granules. Residues 1–63 (MSYDYHQNWG…GRHPGHLKGR (63 aa)) are disordered. A required for the pre-miR-134 transport region spans residues 1–107 (MSYDYHQNWG…IVQLLHSVQT (107 aa)). Residues 1–202 (MSYDYHQNWG…KKTDLRYIEM (202 aa)) are necessary for nuclear and nucleolar caps localizations. Residues 16–51 (RSSGGGYGGSYGGSHGGGHGGNRGSGGGGGGGGGRG) are compositionally biased toward gly residues. The DSM (DHX36-specific motif) stretch occupies residues 56-78 (HPGHLKGREIGLWYAKKQGQKNK). The required for G4-DNA- and G4-RNA-binding stretch occupies residues 56 to 108 (HPGHLKGREIGLWYAKKQGQKNKEAERQERAVVHMDERREEQIVQLLHSVQTK). 2 recA-like domain regions span residues 109–388 (NDKD…MIHI) and 389–630 (PGFT…DYQL). The 171-residue stretch at 219–389 (VNMIDNHQVT…FGNCPMIHIP (171 aa)) folds into the Helicase ATP-binding domain. 235 to 240 (GCGKTT) contributes to the ATP binding site. Positions 267 to 319 (RRISAISVAERVAAERAESCGNGNSTGYQIRLQSRLPRKQGSILYCTTGIILQ) are necessary for interaction with single-stranded DNA at the 3'-end of the G4-DNA structure. Positions 336–339 (DEIH) match the DEAH box motif. The Mg(2+) site is built by Glu-337 and His-339. The 171-residue stretch at 479 to 649 (ALIRYIVLEE…ELCLQIKILR (171 aa)) folds into the Helicase C-terminal domain. Residues 500-559 (WDNISTLHDLLMSQVMFKSDKFIIIPLHSLMPTVNQTQVFKRTPPGVRKIVIATNIAETS) form a necessary for interaction with single-stranded DNA at the 3'-end of the G4-DNA structure region. A Nuclear localization signal motif is present at residues 519–530 (DKFIIIPLHSLM). ATP-binding positions include Ser-559 and 604–607 (RAGR). A WH domain region spans residues 631–700 (PEILRTPLEE…LGVHLARLPV (70 aa)). Necessary for interaction with single-stranded DNA at the 3'-end of the G4-DNA structure stretches follow at residues 640–699 (ELCL…ARLP), 851–862 (NLGKKRKMVKVY), and 872–902 (HPKSVNVEQTEFNYNWLIYHLKMRTSSIYLY). The segment at 843 to 907 (PKVAKIRLNL…SIYLYDCTEV (65 aa)) is OB-fold-like subdomains. Lys-949 is modified (N6-acetyllysine). Ser-965 carries the phosphoserine modification.

Found in a multi-helicase-TICAM1 complex at least composed of DHX36, DDX1, DDX21 and TICAM1; this complex exists in resting cells with or without dsRNA poly(I:C) ligand stimulation. Interacts (via C-terminus) with TICAM1 (via TIR domain). Interacts (via C-terminus) with DDX21; this interaction serves as bridges to TICAM1. Interacts with TERT; this interaction is dependent on the ability of DHX36 to bind to the G-quadruplex RNA (G4-RNA) structure present in the telomerase RNA template component (TERC). Interacts with DKC1; this interaction is dependent on the ability of DHX36 to bind to the G4-RNA structure present in TERC. Interacts with PARN; this interaction stimulates PARN to enhance uPA mRNA decay. Interacts with EXOSC3; this interaction occurs in a RNase-insensitive manner. Interacts with EXOSC10; this interaction occurs in a RNase-insensitive manner. Interacts with ILF3; this interaction occurs in a RNA-dependent manner. Interacts with ELAVL1; this interaction occurs in an RNA-dependent manner. Interacts with DDX5; this interaction occurs in a RNA-dependent manner. Interacts with DDX17; this interaction occurs in a RNA-dependent manner. Interacts with HDAC1; this interaction occurs in a RNA-dependent manner. Interacts with HDAC3; this interaction occurs in a RNA-dependent manner. Interacts with HDAC4. Interacts with AGO1. Interacts with AGO2. Interacts with ERCC6. Requires Mg(2+) as cofactor.

It is found in the nucleus. The protein resides in the cytoplasm. The protein localises to the cytosol. Its subcellular location is the stress granule. It localises to the nucleus speckle. It is found in the chromosome. The protein resides in the telomere. The protein localises to the mitochondrion. Its subcellular location is the perikaryon. It localises to the cell projection. It is found in the dendrite. The protein resides in the axon. The catalysed reaction is ATP + H2O = ADP + phosphate + H(+). With respect to regulation, ATPase activity is enhanced in the presence of homomeric poly(U) RNAs, but not by double-stranded DNA (dsDNA), double-stranded RNA (dsRNA) and tRNA. Functionally, multifunctional ATP-dependent helicase that unwinds G-quadruplex (G4) structures. Plays a role in many biological processes such as genomic integrity, gene expression regulations and as a sensor to initiate antiviral responses. G4 structures correspond to helical structures containing guanine tetrads. Binds with high affinity to and unwinds G4 structures that are formed in nucleic acids (G4-DNA and G4-RNA). Plays a role in genomic integrity. Converts the G4-RNA structure present in telomerase RNA template component (TREC) into a double-stranded RNA to promote P1 helix formation that acts as a template boundary ensuring accurate reverse transcription. Plays a role in transcriptional regulation. Resolves G4-DNA structures in promoters of genes, such as YY1, KIT/c-kit and ALPL and positively regulates their expression. Plays a role in post-transcriptional regulation. Unwinds a G4-RNA structure located in the 3'-UTR polyadenylation site of the pre-mRNA TP53 and stimulates TP53 pre-mRNA 3'-end processing in response to ultraviolet (UV)-induced DNA damage. Binds to the precursor-microRNA-134 (pre-miR-134) terminal loop and regulates its transport into the synapto-dendritic compartment. Involved in the pre-miR-134-dependent inhibition of target gene expression and the control of dendritic spine size. Plays a role in the regulation of cytoplasmic mRNA translation and mRNA stability. Binds to both G4-RNA structures and alternative non-quadruplex-forming sequence within the 3'-UTR of the PITX1 mRNA regulating negatively PITX1 protein expression. Binds to both G4-RNA structure in the 5'-UTR and AU-rich elements (AREs) localized in the 3'-UTR of NKX2-5 mRNA to either stimulate protein translation or induce mRNA decay in an ELAVL1-dependent manner, respectively. Also binds to ARE sequences present in several mRNAs mediating exosome-mediated 3'-5' mRNA degradation. Involved in cytoplasmic urokinase-type plasminogen activator (uPA) mRNA decay. Component of a multi-helicase-TICAM1 complex that acts as a cytoplasmic sensor of viral double-stranded RNA (dsRNA) and plays a role in the activation of a cascade of antiviral responses including the induction of pro-inflammatory cytokines via the adapter molecule TICAM1. Required for the early embryonic development and hematopoiesis. Involved in the regulation of cardioblast differentiation and proliferation during heart development. Involved in spermatogonia differentiation. May play a role in ossification. The polypeptide is ATP-dependent DNA/RNA helicase DHX36 (Bos taurus (Bovine)).